The following is a 369-amino-acid chain: Anhydro-N-acetylmuramic acid kinase (369 aa).

Residue 12-19 participates in ATP binding; that stretch reads GTSLDGVD.

Belongs to the anhydro-N-acetylmuramic acid kinase family.

The catalysed reaction is 1,6-anhydro-N-acetyl-beta-muramate + ATP + H2O = N-acetyl-D-muramate 6-phosphate + ADP + H(+). It participates in amino-sugar metabolism; 1,6-anhydro-N-acetylmuramate degradation. It functions in the pathway cell wall biogenesis; peptidoglycan recycling. Catalyzes the specific phosphorylation of 1,6-anhydro-N-acetylmuramic acid (anhMurNAc) with the simultaneous cleavage of the 1,6-anhydro ring, generating MurNAc-6-P. Is required for the utilization of anhMurNAc either imported from the medium or derived from its own cell wall murein, and thus plays a role in cell wall recycling. The protein is Anhydro-N-acetylmuramic acid kinase of Escherichia coli O7:K1 (strain IAI39 / ExPEC).